The primary structure comprises 412 residues: ORC1-type DNA replication protein 2 (412 aa).

Residues 61 to 65 (VGKTA), Tyr207, and Arg219 each bind ATP.

It belongs to the CDC6/cdc18 family.

Functionally, involved in regulation of DNA replication. This chain is ORC1-type DNA replication protein 2 (cdc6b), found in Haloarcula marismortui (strain ATCC 43049 / DSM 3752 / JCM 8966 / VKM B-1809) (Halobacterium marismortui).